Reading from the N-terminus, the 620-residue chain is U1 small nuclear ribonucleoprotein component SNU71 (620 aa).

Residues 59 to 75 (NSNDDGSIHNSDQNTGL) show a composition bias toward polar residues. 5 disordered regions span residues 59 to 82 (NSND…KEAS), 246 to 270 (TDER…TNTL), 323 to 373 (RKNH…NRRY), 428 to 452 (HRSF…AKEL), and 509 to 537 (SVES…AAED). Basic and acidic residues predominate over residues 246–256 (TDERNSKKEQL). A compositionally biased stretch (polar residues) spans 258–270 (DSSTQYKVDTNTL). Residues 296 to 385 (EKEKKMKSTY…MLHQLHSNTE (90 aa)) are a coiled coil. The segment covering 335 to 355 (TEEEDTNMEDEDEEDDTEDDL) has biased composition (acidic residues). Composition is skewed to basic and acidic residues over residues 356–373 (ALEK…NRRY) and 431–445 (FKEQ…DRAK). Phosphoserine is present on residues Ser-512 and Ser-514. Residues 517 to 537 (EGYRESELPPTKPSERSAAED) show a composition bias toward basic and acidic residues.

Belongs to the SNU71 family. Component of the 18S U1 snRNP particle, a subcomplex of the spliceosome.

Its subcellular location is the cytoplasm. The protein localises to the nucleus. Component of the U1 snRNP particle, which recognizes and binds the 5'-splice site of pre-mRNA. Together with other non-snRNP factors, U1 snRNP forms the spliceosomal commitment complex, that targets pre-mRNA to the splicing pathway. The sequence is that of U1 small nuclear ribonucleoprotein component SNU71 (SNU71) from Saccharomyces cerevisiae (strain ATCC 204508 / S288c) (Baker's yeast).